A 140-amino-acid polypeptide reads, in one-letter code: Lipoprotein MlpG (140 aa).

A signal peptide spans 1–17 (MKIINILFCLFLLMLNG). Residue C18 is the site of N-palmitoyl cysteine attachment. The S-diacylglycerol cysteine moiety is linked to residue C18. The segment at 22 to 57 (DTNTKQTKSRQKRDLTQKEATQEKPKSKSKEDLLRE) is disordered. A compositionally biased stretch (basic and acidic residues) spans 33–57 (KRDLTQKEATQEKPKSKSKEDLLRE).

The protein belongs to the Multicopy lipoprotein (Mlp) family.

Its subcellular location is the cell outer membrane. Its function is as follows. An outer membrane protein that may participate in pathogenesis. Some human Lyme disease patients have antibodies against this protein. The Mlp proteins probably undergo intragenic recombination, generating new alleles. The chain is Lipoprotein MlpG from Borreliella burgdorferi (strain ATCC 35210 / DSM 4680 / CIP 102532 / B31) (Borrelia burgdorferi).